We begin with the raw amino-acid sequence, 173 residues long: MALRPSKCYREINKPAYTRKKYIRAVPQPKVVHYVNGNKGGDFPVEVHLVVKDDIQIRHNALESARIVGNKYTQNKCGRLGYKFQIRVYPHQVLRENKMASGAGADRISDGMRLSFGKAVGTAARVRKGQKIITISTTPENVIHAKEALRRCNMKMPVKCKIVIGKGAELVKN.

It belongs to the universal ribosomal protein uL16 family.

In Methanococcus aeolicus (strain ATCC BAA-1280 / DSM 17508 / OCM 812 / Nankai-3), this protein is Large ribosomal subunit protein uL16.